The following is a 600-amino-acid chain: NADPH-dependent diflavin oxidoreductase 1 (600 aa).

The Flavodoxin-like domain maps to Leu6–Trp150. FMN is bound by residues Ser12–Ala17, Ala59–Gly62, Leu97–Asn106, and Asp132. The FAD-binding FR-type domain maps to Ile210 to Pro449. Residues Arg354, Arg386–Ser389, and Gly420–Ser423 contribute to the FAD site. NADP(+) is bound by residues Thr463, Ser518–Arg519, and Lys524–Gln528. Trp599 serves as a coordination point for FAD.

This sequence belongs to the NADPH-dependent diflavin oxidoreductase NDOR1 family. In the N-terminal section; belongs to the flavodoxin family. It in the C-terminal section; belongs to the flavoprotein pyridine nucleotide cytochrome reductase family. Interacts with ciapin1; as part of the cytosolic iron-sulfur (Fe-S) protein assembly (CIA) machinery. FAD is required as a cofactor. The cofactor is FMN.

Its subcellular location is the cytoplasm. It is found in the perinuclear region. It catalyses the reaction 2 oxidized [2Fe-2S]-[protein] + NADPH = 2 reduced [2Fe-2S]-[protein] + NADP(+) + H(+). Functionally, NADPH-dependent reductase which is a central component of the cytosolic iron-sulfur (Fe-S) protein assembly (CIA) machinery. Transfers electrons from NADPH via its FAD and FMN prosthetic groups to the [2Fe-2S] cluster of ciapin1, another key component of the CIA machinery. In turn, this reduced cluster provides electrons for assembly of cytosolic iron-sulfur cluster proteins. It can also reduce the [2Fe-2S] cluster of cisd1 and activate this protein implicated in Fe/S cluster repair. The polypeptide is NADPH-dependent diflavin oxidoreductase 1 (Xenopus laevis (African clawed frog)).